The chain runs to 205 residues: Thiamine-phosphate synthase (205 aa).

4-amino-2-methyl-5-(diphosphooxymethyl)pyrimidine contacts are provided by residues 35–39 and asparagine 67; that span reads QYRDK. Residues aspartate 68 and aspartate 86 each contribute to the Mg(2+) site. Threonine 105 lines the 4-amino-2-methyl-5-(diphosphooxymethyl)pyrimidine pocket. 132 to 134 provides a ligand contact to 2-[(2R,5Z)-2-carboxy-4-methylthiazol-5(2H)-ylidene]ethyl phosphate; that stretch reads SQT. Lysine 135 serves as a coordination point for 4-amino-2-methyl-5-(diphosphooxymethyl)pyrimidine. A 2-[(2R,5Z)-2-carboxy-4-methylthiazol-5(2H)-ylidene]ethyl phosphate-binding site is contributed by glycine 162.

It belongs to the thiamine-phosphate synthase family. Mg(2+) is required as a cofactor.

The enzyme catalyses 2-[(2R,5Z)-2-carboxy-4-methylthiazol-5(2H)-ylidene]ethyl phosphate + 4-amino-2-methyl-5-(diphosphooxymethyl)pyrimidine + 2 H(+) = thiamine phosphate + CO2 + diphosphate. It carries out the reaction 2-(2-carboxy-4-methylthiazol-5-yl)ethyl phosphate + 4-amino-2-methyl-5-(diphosphooxymethyl)pyrimidine + 2 H(+) = thiamine phosphate + CO2 + diphosphate. The catalysed reaction is 4-methyl-5-(2-phosphooxyethyl)-thiazole + 4-amino-2-methyl-5-(diphosphooxymethyl)pyrimidine + H(+) = thiamine phosphate + diphosphate. Its pathway is cofactor biosynthesis; thiamine diphosphate biosynthesis; thiamine phosphate from 4-amino-2-methyl-5-diphosphomethylpyrimidine and 4-methyl-5-(2-phosphoethyl)-thiazole: step 1/1. Functionally, condenses 4-methyl-5-(beta-hydroxyethyl)thiazole monophosphate (THZ-P) and 2-methyl-4-amino-5-hydroxymethyl pyrimidine pyrophosphate (HMP-PP) to form thiamine monophosphate (TMP). The protein is Thiamine-phosphate synthase of Pseudomonas syringae pv. tomato (strain ATCC BAA-871 / DC3000).